The sequence spans 61 residues: Ubiquinol-cytochrome c reductase complex assembly factor 6 (61 aa).

The Mitochondrial matrix portion of the chain corresponds to Met-1–Gln-9. A helical transmembrane segment spans residues Tyr-10–Tyr-32. The Mitochondrial intermembrane segment spans residues Lys-33–Ala-61.

The protein belongs to the UQCC6 family. In terms of assembly, interacts with sloth1; the interaction stabilizes both components. In terms of tissue distribution, expressed in the brain.

It is found in the mitochondrion inner membrane. Its subcellular location is the mitochondrion. Required for the assembly and stability of the mitochondrial ubiquinol-cytochrome c reductase complex (complex III (CIII) or cytochrome b-c1 complex), a multisubunit transmembrane complex that is part of the mitochondrial electron transport chain (ETC) which drives oxidative phosphorylation. In Drosophila melanogaster (Fruit fly), this protein is Ubiquinol-cytochrome c reductase complex assembly factor 6.